Consider the following 458-residue polypeptide: MFVPEEIIETIKMIEYQNLDIRTTTLGINLKDCADKDLDLLKENIYDKITSLGGNLVETANKVSQKYGIPIVNKRISVTPIGLIMGSTVKGLSDEEAVDACVEVGITLDKIAKEVGVDFIGGYSALVQKRATYEEKMLIRSIPKLMTKTDKVCASVNVATTKAGINMYAVKKMGEIVKETSEITKDAIGCAKIVVFCNAPEDNPFMAGAFHGPGEGDAVINAGVSGPGVVRAVVEQLKGKDIGTVSDEIKKTAFKITRMGELVGKEVANELGVNFGIVDLSLAPTPAIGDSIANILEAVGLERCGTHGTTAALAMLNDAVKKGGAMASSNVGGLSGAFIPVSEDAGMIEAVEVGALRLEKLEAMTCVCSVGLDMIAVPGKTPASTLSAIMADEMAIGMINKKTTAVRIIPVPGKDVGDYVEYGGLLGTAPIMPVSEFSSEELIERGGRIPAPIQSLTN.

This sequence belongs to the UPF0210 family.

This chain is UPF0210 protein MMP1427, found in Methanococcus maripaludis (strain DSM 14266 / JCM 13030 / NBRC 101832 / S2 / LL).